The primary structure comprises 705 residues: Polyribonucleotide nucleotidyltransferase (705 aa).

Positions 486 and 492 each coordinate Mg(2+). Positions 553-612 (PQFHTMKVDPEKIRDIIGKGGATIRSITEETGASIDIDDDGTVKIYGDDGDSLQGAINRI) constitute a KH domain. One can recognise an S1 motif domain in the interval 622–690 (GEVYKGKVVR…QRGRIKLSIK (69 aa)).

This sequence belongs to the polyribonucleotide nucleotidyltransferase family. Component of the RNA degradosome, which is a multiprotein complex involved in RNA processing and mRNA degradation. The cofactor is Mg(2+).

It is found in the cytoplasm. The catalysed reaction is RNA(n+1) + phosphate = RNA(n) + a ribonucleoside 5'-diphosphate. In terms of biological role, involved in mRNA degradation. Catalyzes the phosphorolysis of single-stranded polyribonucleotides processively in the 3'- to 5'-direction. This is Polyribonucleotide nucleotidyltransferase from Teredinibacter turnerae (strain ATCC 39867 / T7901).